A 215-amino-acid polypeptide reads, in one-letter code: tRNA (guanine-N(7)-)-methyltransferase (215 aa).

Residues glutamate 44, glutamate 69, aspartate 96, and aspartate 118 each coordinate S-adenosyl-L-methionine. The active site involves aspartate 118. Lysine 122 is a substrate binding site. The interaction with RNA stretch occupies residues 124–129 (RHEKRR). Substrate-binding positions include aspartate 154 and 192–195 (TEYE).

This sequence belongs to the class I-like SAM-binding methyltransferase superfamily. TrmB family.

It carries out the reaction guanosine(46) in tRNA + S-adenosyl-L-methionine = N(7)-methylguanosine(46) in tRNA + S-adenosyl-L-homocysteine. It participates in tRNA modification; N(7)-methylguanine-tRNA biosynthesis. Its function is as follows. Catalyzes the formation of N(7)-methylguanine at position 46 (m7G46) in tRNA. The polypeptide is tRNA (guanine-N(7)-)-methyltransferase (Limosilactobacillus fermentum (strain NBRC 3956 / LMG 18251) (Lactobacillus fermentum)).